A 607-amino-acid polypeptide reads, in one-letter code: UvrABC system protein C (607 aa).

Residues 16-94 (GRPGVYRMFD…IKEWRPPYNI (79 aa)) enclose the GIY-YIG domain. A UVR domain is found at 203–238 (NALTDELSAGMEQAASTLDFEKAAELRDQISLLRRV).

The protein belongs to the UvrC family. In terms of assembly, interacts with UvrB in an incision complex.

The protein resides in the cytoplasm. Functionally, the UvrABC repair system catalyzes the recognition and processing of DNA lesions. UvrC both incises the 5' and 3' sides of the lesion. The N-terminal half is responsible for the 3' incision and the C-terminal half is responsible for the 5' incision. The sequence is that of UvrABC system protein C from Pseudomonas protegens (strain DSM 19095 / LMG 27888 / CFBP 6595 / CHA0).